We begin with the raw amino-acid sequence, 205 residues long: N-(5'-phosphoribosyl)anthranilate isomerase (205 aa).

The protein belongs to the TrpF family.

It catalyses the reaction N-(5-phospho-beta-D-ribosyl)anthranilate = 1-(2-carboxyphenylamino)-1-deoxy-D-ribulose 5-phosphate. Its pathway is amino-acid biosynthesis; L-tryptophan biosynthesis; L-tryptophan from chorismate: step 3/5. The polypeptide is N-(5'-phosphoribosyl)anthranilate isomerase (Acidiphilium cryptum (strain JF-5)).